Here is a 382-residue protein sequence, read N- to C-terminus: Alanine racemase 1 (382 aa).

K39 serves as the catalytic Proton acceptor; specific for D-alanine. The residue at position 39 (K39) is an N6-(pyridoxal phosphate)lysine. R138 is a substrate binding site. The Proton acceptor; specific for L-alanine role is filled by Y265. Residue M312 participates in substrate binding.

The protein belongs to the alanine racemase family. The cofactor is pyridoxal 5'-phosphate.

The enzyme catalyses L-alanine = D-alanine. It participates in amino-acid biosynthesis; D-alanine biosynthesis; D-alanine from L-alanine: step 1/1. In terms of biological role, catalyzes the interconversion of L-alanine and D-alanine. May also act on other amino acids. The sequence is that of Alanine racemase 1 (alr1) from Staphylococcus aureus (strain NCTC 8325 / PS 47).